The sequence spans 1247 residues: MEDAGAAGPGPEPEPEPEPEPEPAPEPEPEPKPGAGTSEAFSRLWTDVMGILDGSLGNIDDLAQQYADYYNTCFSDVCERMEELRKRRVSQDLEVEKPDASPTSLQLRSQIEESLGFCSAVSTPEVERKNPLHKSNSEDSSVGKGDWKKKNKYFWQNFRKNQKGIMRQTSKGEDVGYVASEITMSDEERIQLMMMVKEKMITIEEALARLKEYEAQHRQSAALDPADWPDGSYPTFDGSSNCNSREQSDDETEESVKFKRLHKLVNSTRRVRKKLIRVEEMKKPSTEGGEEHVFENSPVLDERSALYSGVHKKPLFFDGSPEKPPEDDSDSLTTSPSSSSLDTWGAGRKLVKTFSKGESRGLIKPPKKMGTFFSYPEEEKAQKVSRSLTEGEMKKGLGSLSHGRTCSFGGFDLTNRSLHVGSNNSDPMGKEGDFVYKEVIKSPTASRISLGKKVKSVKETMRKRMSKKYSSSVSEQDSGLDGMPGSPPPSQPDPEHLDKPKLKAGGSVESLRSSLSGQSSMSGQTVSTTDSSTSNRESVKSEDGDDEEPPYRGPFCGRARVHTDFTPSPYDTDSLKLKKGDIIDIISKPPMGTWMGLLNNKVGTFKFIYVDVLSEDEEKPKRPTRRRRKGRPPQPKSVEDLLDRINLKEHMPTFLFNGYEDLDTFKLLEEEDLDELNIRDPEHRAVLLTAVELLQEYDSNSDQSGSQEKLLVDSQGLSGCSPRDSGCYESSENLENGKTRKASLLSAKSSTEPSLKSFSRNQLGNYPTLPLMKSGDALKQGQEEGRLGGGLAPDTSKSCDPPGVTGLNKNRRSLPVSICRSCETLEGPQTVDTWPRSHSLDDLQVEPGAEQDVPTEVTEPPPQIVPEVPQKTTASSTKAQPLEQDSAVDNALLLTQSKRFSEPQKLTTKKLEGSIAASGRGLSPPQCLPRNYDAQPPGAKHGLARTPLEGHRKGHEFEGTHHPLGTKEGVDAEQRMQPKIPSQPPPVPAKKSRERLANGLHPVPMGPSGALPSPDAPCLPVKRGSPASPTSPSDCPPALAPRPLSGQAPGSPPSTRPPPWLSELPENTSLQEHGVKLGPALTRKVSCARGVDLETLTENKLHAEGIDLTEEPYSDKHGRCGIPEALVQRYAEDLDQPERDVAANMDQIRVKQLRKQHRMAIPSGGLTEICRKPVSPGCISSVSDWLISIGLPMYAGTLSTAGFSTLSQVPSLSHTCLQEAGITEERHIRKLLSAARLFKLPPGPEAM.

Residues 1-39 (MEDAGAAGPGPEPEPEPEPEPEPAPEPEPEPKPGAGTSE) are disordered. Positions 13-28 (PEPEPEPEPEPAPEPE) are enriched in acidic residues. Ser90 is subject to Phosphoserine. Disordered stretches follow at residues 126-145 (VERK…VGKG), 221-257 (AALD…ESVK), and 316-344 (FFDG…LDTW). Ser248 carries the post-translational modification Phosphoserine. The span at 331–343 (SLTTSPSSSSLDT) shows a compositional bias: low complexity. Ser407 carries the post-translational modification Phosphoserine. The tract at residues 449–573 (SLGKKVKSVK…DFTPSPYDTD (125 aa)) is disordered. Low complexity-rich tracts occupy residues 468–484 (KYSS…DGMP) and 505–523 (GGSV…SMSG). The segment covering 524-536 (QTVSTTDSSTSNR) has biased composition (polar residues). Residues 554–615 (PFCGRARVHT…KFIYVDVLSE (62 aa)) enclose the SH3 domain. Ser614 bears the Phosphoserine mark. 2 disordered regions span residues 616-639 (DEEK…KSVE) and 713-810 (DSQG…LNKN). Over residues 622–631 (RPTRRRRKGR) the composition is skewed to basic residues. The 65-residue stretch at 633 to 697 (PQPKSVEDLL…LTAVELLQEY (65 aa)) folds into the SAM 1 domain. The span at 746–765 (SAKSSTEPSLKSFSRNQLGN) shows a compositional bias: polar residues. Residues Ser821 and Ser839 each carry the phosphoserine modification. Disordered stretches follow at residues 846–884 (EPGA…PLEQ), 903–946 (PQKL…LART), and 971–1065 (DAEQ…SELP). The segment at 852-860 (DVPTEVTEP) is required for interaction with TRAF6. Phosphothreonine is present on Thr858. The segment covering 1050–1060 (GSPPSTRPPPW) has biased composition (pro residues). The 65-residue stretch at 1177-1241 (GCISSVSDWL…LSAARLFKLP (65 aa)) folds into the SAM 2 domain.

In terms of assembly, interacts with GNAS. Interacts with IQGAP1. Interacts with TRAF6 (via C-terminus); the interaction is LPS-dependent. Interacts with MAP3K7, CHUK and IKBKB. Expressed ubiquitously, with highest levels in lung, placenta, spleen and thymus. Down-regulated in the majority (74%) of breast tumors in comparison with corresponding normal breast epithelial tissues. Expressed in the epidermis, epidermal keratinocytes, dermal fibroblasts and melanocytes.

Its subcellular location is the cytoplasm. Its function is as follows. Is a positive regulator of NF-kappa-B signaling downstream of TLR4 activation. It acts as a scaffold molecule to assemble a molecular complex that includes TRAF6, MAP3K7, CHUK and IKBKB, thereby facilitating NF-kappa-B signaling activation. Regulates TRAF6 and MAP3K7 ubiquitination. Involved in the regulation of cell mobility. Regulates lipolysaccharide (LPS)-induced endothelial cell migration. Is involved in the regulation of skin pigmentation through the control of melanocyte migration in the epidermis. This chain is SAM and SH3 domain-containing protein 1 (SASH1), found in Homo sapiens (Human).